A 1125-amino-acid polypeptide reads, in one-letter code: Transient receptor potential cation channel subfamily A member 1 (1125 aa).

The Cytoplasmic portion of the chain corresponds to 1–721 (MKRGLRRILL…KWCAYGFRAH (721 aa)). 9 ANK repeats span residues 63–94 (ENLCPLHHAAAEGQVELMELIINGSSCEVLNI), 98–127 (YGNTPLHCAAEKNQVESVKFLLSQGANPNL), 131–161 (NMMSPLHIAVHGMYNEVIKVLTEHKATNINL), 165–194 (NGNTALMSTCAKDNSEALQILLEKGAKLCK), 198–227 (WGDYPVHQAAFSGAKKCMELILAYGEKNGY), 239–268 (KKASPLHLAVQSGDLDMIKMCLDNGAHIDM), 272–301 (AKCMALHFAATQGATDIVKLMISSYTGSSD), 309–338 (NQETLLHRASLFDHHDLAEYLISVGADINS), and 342–371 (EGRSPLILATASASWNIVNLLLCKGAKVDI). 5 cysteine pairs are disulfide-bonded: Cys193/Cys666, Cys463/Cys666, Cys609/Cys622, Cys622/Cys666, and Cys634/Cys859. At Pro395 the chain carries 4-hydroxyproline; transient. ANK repeat units lie at residues 413–442 (DGCTPLHYACRQGVPVSVNNLLGFNVSIHS), 446–475 (DKKSPLHFAASYGRINTCQRLLQDISDTRL), 482–511 (HGMTPLHLAAKNGHDKVVQLLLKKGALFLS), 514–543 (NGWTALHHASMGGYTQTMKVILDTNLKCTD), and 548–577 (EGNTALHFAAREGHAKAVAMLLSYNADILL). Residues Cys415 and Cys422 each contribute to the (E)-cinnamaldehyde site. A (E)-cinnamaldehyde-binding site is contributed by Cys622. Residue Cys634 is modified to Cysteine sulfenic acid (-SOH); transient; in hyperoxia. (E)-cinnamaldehyde is bound by residues Cys642, Cys666, and Lys712. Residues 722–742 (MMNLGSYCLGLIPMTLLVVKI) form a helical membrane-spanning segment. Residues 743–767 (QPGMAFNSTGIINGTSSTHEERIDT) are Extracellular-facing. 2 N-linked (GlcNAc...) asparagine glycosylation sites follow: Asn749 and Asn755. A helical transmembrane segment spans residues 768-788 (LNSFPIKICMILVFLSSIFGY). The Cytoplasmic portion of the chain corresponds to 789–806 (CKEVIQIFQQKRNYFLDY). Ca(2+) is bound by residues Glu791, Gln794, Asn808, and Glu811. The helical transmembrane segment at 807 to 827 (NNALEWVIYTTSIIFVLPLFL) threads the bilayer. The Extracellular segment spans residues 828 to 832 (NIPAY). Residues 833–853 (MQWQCGAIAIFFYWMNFLLYL) traverse the membrane as a helical segment. Residues 854-876 (QRFENCGIFIVMLEVIFKTLLRS) lie on the Cytoplasmic side of the membrane. The residue at position 859 (Cys859) is a Cysteine sulfenic acid (-SOH); transient; in hyperoxia. A helical membrane pass occupies residues 877-897 (TGVFIFLLLAFGLSFYVLLNF). Over 898–904 (QDAFSTP) the chain is Extracellular. Positions 905-925 (LLSLIQTFSMMLGDINYRDAF) form an intramembrane region, pore-forming. Topologically, residues 926–937 (LEPLFRNELAYP) are extracellular. A helical transmembrane segment spans residues 938–959 (VLTFGQLIAFTMFVPIVLMNLL). The Cytoplasmic segment spans residues 960 to 1125 (IGLAVGDIAE…THCSISHPDF (166 aa)). The stretch at 1044–1073 (MEILKQKYRLKDLTSLLEKQHELIKLIIQK) forms a coiled coil. Residue 1048–1054 (KQKYRLK) participates in a 1,2-diacyl-sn-glycero-3-phospho-(1D-myo-inositol) binding.

This sequence belongs to the transient receptor (TC 1.A.4) family. As to quaternary structure, homotetramer. Interacts with TMEM100. Interacts with EGLN1. Interacts with the scorpion wasabi receptor toxin at the same site that electrophiles but in a non-covalent manner. In terms of processing, TRPA1 activation by electrophiles occurs though covalent modification of specific cysteine residues in the N-terminal cytoplasmic domain. Hydroxylation is required for TRPA1 activity inhibition in normoxia. In hypoxia, the decrease in oxygen concentration diminishes the activity of the hydroxylase EGLN1, thus relieving TRPA1 from inhibition and ultimately leading to channel activation. Post-translationally, oxidation of Cys-634 and Cys-859 in hyperoxia may override the hydroxylase EGLN1-mediated inhibition, causing TRPA1 activation. As to expression, expressed in inner ear (at protein level). Specifically expressed in a subset of nociceptive neurons. Expressed in the same neurons that TRPV1. In contrast, it is not expressed in neurons expressing TRPM8. Expressed in the superior cervical ganglion of vagus nerve. Expressed in the inferior ganglion (nodose ganglion) of vagus nerve. Expressed in dorsal root ganglia neurons.

It localises to the cell membrane. It carries out the reaction Ca(2+)(in) = Ca(2+)(out). It catalyses the reaction Mg(2+)(in) = Mg(2+)(out). The catalysed reaction is Na(+)(in) = Na(+)(out). The enzyme catalyses K(+)(in) = K(+)(out). It carries out the reaction Zn(2+)(in) = Zn(2+)(out). Electrophilic ligands activate the channel by covalent modification of intracellular cysteines. Cys-622 plays a key role in covalent binding of electrophiles. Extracellular Ca(2+) both potentiates and inactivates TRPA1; a rapid potentiation follows by slow desensitization. Activated by increase in intracellular Ca(2+) concentration. Inhibited by the potent blocker of TRPV channels ruthenium red, A-967079. Activated by icilin, sulfhydryl reactive agent MTSEA, N-methyl maleimide (NMM), and PF-4840154. Also activated by hyperoxia. Activated by intracellular Zn(2+). TRPA1 activation may critically depend on the presence of small intracellular compounds such as polyphosphates. Functionally, ligand-activated Ca(2+)-permeable, nonselective cation channel. Involved in pain detection and possibly also in cold perception, oxygen concentration perception, cough, itch, and inner ear function. Has a relatively high Ca(2+) selectivity, with a preference for divalent over monovalent cations (Ca(2+) &gt; Ba(2+) &gt; Mg(2+) &gt; NH4(+) &gt; Li(+) &gt; K(+)), the influx of cation into the cytoplasm, leads to membrane depolarization. Has a central role in the pain response to endogenous inflammatory mediators, such as bradykinin and to a diverse array of irritants. Activated by a large variety of structurally unrelated electrophilic and non-electrophilic chemical compounds, such as allylthiocyanate (AITC) from mustard oil or wasabi, cinnamaldehyde, diallyl disulfide (DADS) from garlic, and acrolein, an environmental irritant. Electrophilic ligands activate TRPA1 by interacting with critical N-terminal Cys residues in a covalent manner. Non-electrophile agonists bind at distinct sites in the transmembrane domain to promote channel activation. Also acts as an ionotropic cannabinoid receptor by being activated by delta(9)-tetrahydrocannabinol (THC), the psychoactive component of marijuana. May be a component for the mechanosensitive transduction channel of hair cells in inner ear, thereby participating in the perception of sounds. In Mus musculus (Mouse), this protein is Transient receptor potential cation channel subfamily A member 1.